The primary structure comprises 404 residues: GTPase Obg (404 aa).

The 159-residue stretch at 1–159 (MKFIDEARIE…RALRLELKVL (159 aa)) folds into the Obg domain. The tract at residues 22 to 43 (SFRREKFIPRGGPDGGDGGRGG) is disordered. The segment covering 33-43 (GPDGGDGGRGG) has biased composition (gly residues). The region spanning 160-334 (ADVGLLGMPN…LVFAIQDFLD (175 aa)) is the OBG-type G domain. Residues 166 to 173 (GMPNAGKS), 191 to 195 (FTTLA), 213 to 216 (DIPG), 284 to 287 (NKLD), and 315 to 317 (SAL) contribute to the GTP site. The Mg(2+) site is built by serine 173 and threonine 193. Residues 373-404 (LLAEGETGTGDDGRDGNENDPADEQDTNRPNH) form a disordered region.

This sequence belongs to the TRAFAC class OBG-HflX-like GTPase superfamily. OBG GTPase family. Monomer. It depends on Mg(2+) as a cofactor.

It localises to the cytoplasm. In terms of biological role, an essential GTPase which binds GTP, GDP and possibly (p)ppGpp with moderate affinity, with high nucleotide exchange rates and a fairly low GTP hydrolysis rate. Plays a role in control of the cell cycle, stress response, ribosome biogenesis and in those bacteria that undergo differentiation, in morphogenesis control. The chain is GTPase Obg from Aromatoleum aromaticum (strain DSM 19018 / LMG 30748 / EbN1) (Azoarcus sp. (strain EbN1)).